Consider the following 586-residue polypeptide: Germ cell nuclear acidic protein (586 aa).

Disordered stretches follow at residues 17–119 (GWDR…LSSE), 176–202 (KAKTVKTPKSVQKTKKPAPSLCNSPVF), 217–266 (TWRT…SSEE), and 279–318 (LGGRTSASPMPSAEPKPQRPCLSTPSATGRKTGSQVPVKD). A compositionally biased stretch (basic and acidic residues) spans 65–76 (SGKENRSQEEHI). Polar residues predominate over residues 94–107 (TPKSTFKQSASSAQ). Positions 176-191 (KAKTVKTPKSVQKTKK) are enriched in basic residues. The segment covering 225–244 (PPSDEHQATSKDREETEKPR) has biased composition (basic and acidic residues). Polar residues predominate over residues 299 to 313 (CLSTPSATGRKTGSQ). Residues 383-482 (KLYQLYNTSV…LYARKAMLAH (100 aa)) enclose the SprT-like domain.

This sequence belongs to the serine-aspartate repeat-containing protein (SDr) family.

Its subcellular location is the nucleus. The protein resides in the PML body. The protein localises to the chromosome. Functionally, may play a role in DNA-protein cross-links (DPCs) clearance, ensuring the genomic stability by protecting germ cells and early embryos from various sources of damage. The polypeptide is Germ cell nuclear acidic protein (gcna) (Danio rerio (Zebrafish)).